Reading from the N-terminus, the 360-residue chain is Transcription factor MYB39 (360 aa).

HTH myb-type domains lie at 10-62 (DKGV…MNYL) and 63-117 (RPDI…RKKL). DNA-binding regions (H-T-H motif) lie at residues 38–62 (WRSLPKLAGLNRCGKSCRLRWMNYL) and 90–113 (WSKIAGHLPGRTDNEIKNYWNTHM). The segment at 299–324 (PSTGSVSVSPETTSLNHPSTAQHSSG) is disordered.

It is found in the nucleus. In Arabidopsis thaliana (Mouse-ear cress), this protein is Transcription factor MYB39 (MYB39).